The primary structure comprises 422 residues: E3 ubiquitin-protein ligase IE2 (422 aa).

Over residues 1–10 the composition is skewed to polar residues; that stretch reads MSRQINAVTP. Disordered regions lie at residues 1-86 and 165-215; these read MSRQ…VQII and SPRS…EGEE. Positions 14-26 are enriched in basic residues; sequence SRRHRLSLSRRRI. Positions 36 to 63 are enriched in low complexity; that stretch reads PSSSSRSQPSSSSRSQPYSSSRSQPYSS. The span at 71 to 80 shows a compositional bias: basic and acidic residues; the sequence is ERSQEQRVSE. A compositionally biased stretch (polar residues) spans 179-196; that stretch reads DVLSQSPDLFDSPQSPQQ. A compositionally biased stretch (acidic residues) spans 200–215; it reads ELEDEDEEEEEEEGEE. The RING-type; degenerate zinc-finger motif lies at 220-268; sequence CNICFTTLKDTKNVDSSFVTSIDCNHAVCFKCYVRIIMDNSTYKCFCSA. Residues 314-414 are a coiled coil; the sequence is IDLNDVERLE…RRNSELVAEL (101 aa).

It belongs to the alphabaculovirus IE2 protein family. Homooligomer. Post-translationally, auto-ubiquitinated.

The protein resides in the host nucleus. The catalysed reaction is S-ubiquitinyl-[E2 ubiquitin-conjugating enzyme]-L-cysteine + [acceptor protein]-L-lysine = [E2 ubiquitin-conjugating enzyme]-L-cysteine + N(6)-ubiquitinyl-[acceptor protein]-L-lysine.. RING-finger E3 ubiquitin ligase that plays an important regulatory role during the initial stages of infection. Migrates to specific nuclear foci early in infection supposely to prepare the sites for viral replication by targeting and ubiquitinating host proteins. The polypeptide is E3 ubiquitin-protein ligase IE2 (IE2) (Bombyx mori nuclear polyhedrosis virus (BmNPV)).